A 536-amino-acid chain; its full sequence is Arylsulfatase (536 aa).

Positions 13, 14, and 51 each coordinate Ca(2+). Cys-51 acts as the Nucleophile in catalysis. Cys-51 is modified (3-oxoalanine (Cys)). His-115 is a catalytic residue. Residues Asp-317 and Asn-318 each contribute to the Ca(2+) site.

This sequence belongs to the sulfatase family. In terms of assembly, monomer. Ca(2+) serves as cofactor. In terms of processing, the conversion to 3-oxoalanine (also known as C-formylglycine, FGly), of a serine or cysteine residue in prokaryotes and of a cysteine residue in eukaryotes, is critical for catalytic activity.

The protein localises to the cytoplasm. The enzyme catalyses an aryl sulfate + H2O = a phenol + sulfate + H(+). Its function is as follows. Hydrolyzes the bond between sulfate and the aromatic ring in a compound such as 4-nitrocatechol sulfate. The sequence is that of Arylsulfatase (atsA) from Pseudomonas aeruginosa (strain ATCC 15692 / DSM 22644 / CIP 104116 / JCM 14847 / LMG 12228 / 1C / PRS 101 / PAO1).